Reading from the N-terminus, the 586-residue chain is Phosphomethylpyrimidine synthase (586 aa).

The tract at residues 1–33 (MKQSVSAEQIELKSSLPGSKKVYVDGPREGMKV) is disordered. Residues 22–33 (VYVDGPREGMKV) show a composition bias toward basic and acidic residues. Residues Asn193, Met222, Tyr251, His287, 307-309 (SRG), 348-351 (DGLR), and Glu387 each bind substrate. A Zn(2+)-binding site is contributed by His391. Position 414 (Tyr414) interacts with substrate. Residue His455 coordinates Zn(2+). [4Fe-4S] cluster is bound by residues Cys535, Cys538, and Cys543.

This sequence belongs to the ThiC family. Requires [4Fe-4S] cluster as cofactor.

The catalysed reaction is 5-amino-1-(5-phospho-beta-D-ribosyl)imidazole + S-adenosyl-L-methionine = 4-amino-2-methyl-5-(phosphooxymethyl)pyrimidine + CO + 5'-deoxyadenosine + formate + L-methionine + 3 H(+). It participates in cofactor biosynthesis; thiamine diphosphate biosynthesis. Functionally, catalyzes the synthesis of the hydroxymethylpyrimidine phosphate (HMP-P) moiety of thiamine from aminoimidazole ribotide (AIR) in a radical S-adenosyl-L-methionine (SAM)-dependent reaction. In Bacillus cereus (strain B4264), this protein is Phosphomethylpyrimidine synthase.